A 349-amino-acid polypeptide reads, in one-letter code: Very-long-chain 3-oxoacyl-CoA reductase (349 aa).

Residues 19 to 39 form a helical membrane-spanning segment; the sequence is AIIFALLLGVFKLTVFSLKFA. The NADP(+) site is built by Val-65, Asp-119, Asn-146, Tyr-221, Lys-225, Val-254, and Ser-256. The active-site Proton donor is Tyr-221. The active-site Lowers pKa of active site Tyr is the Lys-225.

This sequence belongs to the short-chain dehydrogenases/reductases (SDR) family.

The protein localises to the endoplasmic reticulum membrane. It catalyses the reaction a very-long-chain (3R)-3-hydroxyacyl-CoA + NADP(+) = a very-long-chain 3-oxoacyl-CoA + NADPH + H(+). It functions in the pathway lipid metabolism; fatty acid biosynthesis. In terms of biological role, component of the microsomal membrane bound fatty acid elongation system, which produces the 26-carbon very long-chain fatty acids (VLCFA) from palmitate. Catalyzes the reduction of the 3-ketoacyl-CoA intermediate that is formed in each cycle of fatty acid elongation. VLCFAs serve as precursors for ceramide and sphingolipids. This chain is Very-long-chain 3-oxoacyl-CoA reductase, found in Candida albicans (strain SC5314 / ATCC MYA-2876) (Yeast).